The following is a 757-amino-acid chain: Cap-specific mRNA (nucleoside-2'-O-)-methyltransferase 1 (757 aa).

Residues 1-61 (MFQSNQYDEY…EDDEEEEDTP (61 aa)) are disordered. Composition is skewed to acidic residues over residues 18–32 (EENESNENENENENE) and 40–59 (GDQDSEDSFIYEEDDEEEED). Residues 62–108 (KLSFGAKFLAKHGHIEGQGLGKEKDGRIDLIEVDRFQSTKGLGFAEN) form the G-patch domain. The RrmJ-type SAM-dependent 2'-O-MTase domain maps to 214–438 (IFINRAAVKM…ERYIICKNFL (225 aa)). 3 residues coordinate S-adenosyl-L-methionine: Gly-257, Glu-301, and Asp-352. Residue Lys-392 is the Proton acceptor of the active site. Over residues 538–548 (HKNRQKHHHNN) the composition is skewed to basic residues. The tract at residues 538–670 (HKNRQKHHHN…NNNNNNNNKN (133 aa)) is disordered. The segment covering 549-569 (HSNNNNNNNNSNNNNNNNNQH) has biased composition (low complexity). A compositionally biased stretch (basic residues) spans 570 to 581 (QHQHHQHQHHQN). Residues 597–668 (NNNINNNSNN…NNNNNNNNNN (72 aa)) are compositionally biased toward low complexity.

The enzyme catalyses a 5'-end (N(7)-methyl 5'-triphosphoguanosine)-ribonucleoside in mRNA + S-adenosyl-L-methionine = a 5'-end (N(7)-methyl 5'-triphosphoguanosine)-(2'-O-methyl-ribonucleoside) in mRNA + S-adenosyl-L-homocysteine + H(+). S-adenosyl-L-methionine-dependent methyltransferase that mediates mRNA cap1 2'-O-ribose methylation to the 5'-cap structure of mRNAs. Methylates the ribose of the first nucleotide of a m(7)GpppG-capped mRNA to produce m(7)GpppNmp (cap1). Cap1 modification is linked to higher levels of translation. This Dictyostelium discoideum (Social amoeba) protein is Cap-specific mRNA (nucleoside-2'-O-)-methyltransferase 1.